Consider the following 252-residue polypeptide: Imidazole glycerol phosphate synthase subunit HisF (252 aa).

Residues D11 and D130 contribute to the active site.

It belongs to the HisA/HisF family. Heterodimer of HisH and HisF.

It is found in the cytoplasm. It catalyses the reaction 5-[(5-phospho-1-deoxy-D-ribulos-1-ylimino)methylamino]-1-(5-phospho-beta-D-ribosyl)imidazole-4-carboxamide + L-glutamine = D-erythro-1-(imidazol-4-yl)glycerol 3-phosphate + 5-amino-1-(5-phospho-beta-D-ribosyl)imidazole-4-carboxamide + L-glutamate + H(+). Its pathway is amino-acid biosynthesis; L-histidine biosynthesis; L-histidine from 5-phospho-alpha-D-ribose 1-diphosphate: step 5/9. Its function is as follows. IGPS catalyzes the conversion of PRFAR and glutamine to IGP, AICAR and glutamate. The HisF subunit catalyzes the cyclization activity that produces IGP and AICAR from PRFAR using the ammonia provided by the HisH subunit. The sequence is that of Imidazole glycerol phosphate synthase subunit HisF from Desulforudis audaxviator (strain MP104C).